A 440-amino-acid chain; its full sequence is Dihydrolipoyllysine-residue acetyltransferase component of pyruvate dehydrogenase complex (440 aa).

A Lipoyl-binding domain is found at serine 2 to alanine 78. The residue at position 43 (lysine 43) is an N6-lipoyllysine. The segment at alanine 91–glutamate 113 is disordered. The segment covering proline 98 to alanine 110 has biased composition (basic and acidic residues). The Peripheral subunit-binding (PSBD) domain occupies lysine 149 to isoleucine 186. The segment covering alanine 192 to glutamate 202 has biased composition (polar residues). Residues alanine 192–asparagine 214 form a disordered region. Histidine 412 is an active-site residue.

The protein belongs to the 2-oxoacid dehydrogenase family. In terms of assembly, forms a 24-polypeptide structural core with octahedral symmetry. (R)-lipoate serves as cofactor.

The catalysed reaction is N(6)-[(R)-dihydrolipoyl]-L-lysyl-[protein] + acetyl-CoA = N(6)-[(R)-S(8)-acetyldihydrolipoyl]-L-lysyl-[protein] + CoA. Functionally, the pyruvate dehydrogenase complex catalyzes the overall conversion of pyruvate to acetyl-CoA and CO(2). It contains multiple copies of three enzymatic components: pyruvate dehydrogenase (E1), dihydrolipoamide acetyltransferase (E2) and lipoamide dehydrogenase (E3). This chain is Dihydrolipoyllysine-residue acetyltransferase component of pyruvate dehydrogenase complex (pdhC), found in Zymomonas mobilis subsp. mobilis (strain ATCC 31821 / ZM4 / CP4).